A 197-amino-acid chain; its full sequence is Heart- and neural crest derivatives-expressed protein 1 (197 aa).

Disordered stretches follow at residues 61 to 94 and 155 to 184; these read VVGP…RRTE and VDGK…KGRT. Over residues 78–90 the composition is skewed to basic residues; it reads LGRRKGAPPKKER. Residues 80 to 132 form the bHLH domain; it reads RRKGAPPKKERRRTESINSAFAELRECIPNVPADTKLSKIKTLRLATSYIGYL.

In terms of assembly, efficient DNA binding requires dimerization with another bHLH protein. As to expression, highly expressed in the adult heart and expressed at lower levels in the intestine and gall bladder.

It is found in the nucleus. Its subcellular location is the nucleolus. Functionally, plays an essential role in cardiac morphogenesis. The sequence is that of Heart- and neural crest derivatives-expressed protein 1 (hand1) from Xenopus laevis (African clawed frog).